Here is a 131-residue protein sequence, read N- to C-terminus: Small ribosomal subunit protein bS6 (131 aa).

Positions 92 to 131 (RVDEHKDGPSVQMQKRDERERGDRGDRGERRERRDRDDRN) are disordered.

It belongs to the bacterial ribosomal protein bS6 family.

Its function is as follows. Binds together with bS18 to 16S ribosomal RNA. In Paracoccus denitrificans (strain Pd 1222), this protein is Small ribosomal subunit protein bS6.